A 145-amino-acid polypeptide reads, in one-letter code: Large ribosomal subunit protein uL14m (145 aa).

The transit peptide at 1–30 (MAFFTGLWGPFTCVSRVLSHHCFSTTGSLS) directs the protein to the mitochondrion.

It belongs to the universal ribosomal protein uL14 family. Component of the mitochondrial large ribosomal subunit (mt-LSU). Mature mammalian 55S mitochondrial ribosomes consist of a small (28S) and a large (39S) subunit. The 28S small subunit contains a 12S ribosomal RNA (12S mt-rRNA) and 30 different proteins. The 39S large subunit contains a 16S rRNA (16S mt-rRNA), a copy of mitochondrial valine transfer RNA (mt-tRNA(Val)), which plays an integral structural role, and 52 different proteins. Interacts with MALSU1.

It is found in the mitochondrion. In terms of biological role, forms part of 2 intersubunit bridges in the assembled ribosome. Upon binding to MALSU1 intersubunit bridge formation is blocked, preventing ribosome formation and repressing translation. The sequence is that of Large ribosomal subunit protein uL14m (MRPL14) from Homo sapiens (Human).